Here is a 282-residue protein sequence, read N- to C-terminus: Phosphatidylglycerol--prolipoprotein diacylglyceryl transferase (282 aa).

3 helical membrane passes run 19-39 (IGPF…VFGW), 58-78 (ISLV…ILGG), and 104-124 (GGMS…WFAY). Arginine 149 serves as a coordination point for a 1,2-diacyl-sn-glycero-3-phospho-(1'-sn-glycerol). Transmembrane regions (helical) follow at residues 190–210 (AGME…LGAL), 214–234 (GMIL…GEHF), and 250–270 (MGML…VLAI).

The protein belongs to the Lgt family.

It is found in the cell inner membrane. It carries out the reaction L-cysteinyl-[prolipoprotein] + a 1,2-diacyl-sn-glycero-3-phospho-(1'-sn-glycerol) = an S-1,2-diacyl-sn-glyceryl-L-cysteinyl-[prolipoprotein] + sn-glycerol 1-phosphate + H(+). The protein operates within protein modification; lipoprotein biosynthesis (diacylglyceryl transfer). Functionally, catalyzes the transfer of the diacylglyceryl group from phosphatidylglycerol to the sulfhydryl group of the N-terminal cysteine of a prolipoprotein, the first step in the formation of mature lipoproteins. The polypeptide is Phosphatidylglycerol--prolipoprotein diacylglyceryl transferase (Bradyrhizobium diazoefficiens (strain JCM 10833 / BCRC 13528 / IAM 13628 / NBRC 14792 / USDA 110)).